Consider the following 216-residue polypeptide: Probable inactive E3 ubiquitin-protein ligase SINAT6 (216 aa).

An SIAH-type zinc finger spans residues 5-74; the sequence is INDLQVESRV…LLLHLRNDHN (70 aa).

This sequence belongs to the SINA (Seven in absentia) family. Homodimer. Interacts with SINAT1, SINAT2, SINAT3, SINAT4 and SINAT5. Interacts with ATG6 and TRAF1A. As to expression, expressed in roots, rosette leaves, cauline leaves, guard cells and flowers.

It localises to the cytoplasm. The protein localises to the nucleus. In terms of biological role, probable inactive E3 ubiquitin-protein ligase that plays a role in regulation of autophagy. Upon starvation, involved in maintaining ATG6 homeostasis by competitively associating with ATG6, a component of the autophagosome complex. Acts as a positive regulator of drought stress response. Functions as a positive regulator of abscisic acid-mediated stomatal closure. This Arabidopsis thaliana (Mouse-ear cress) protein is Probable inactive E3 ubiquitin-protein ligase SINAT6.